The chain runs to 401 residues: ATP phosphoribosyltransferase regulatory subunit (401 aa).

The disordered stretch occupies residues 373–401 (PGQQGGAAAQGCDRRLQQDDGGGWVTRPL). The segment covering 392-401 (DGGGWVTRPL) has biased composition (gly residues).

It belongs to the class-II aminoacyl-tRNA synthetase family. HisZ subfamily. As to quaternary structure, heteromultimer composed of HisG and HisZ subunits.

It localises to the cytoplasm. The protein operates within amino-acid biosynthesis; L-histidine biosynthesis; L-histidine from 5-phospho-alpha-D-ribose 1-diphosphate: step 1/9. Required for the first step of histidine biosynthesis. May allow the feedback regulation of ATP phosphoribosyltransferase activity by histidine. The polypeptide is ATP phosphoribosyltransferase regulatory subunit (Alkalilimnicola ehrlichii (strain ATCC BAA-1101 / DSM 17681 / MLHE-1)).